Reading from the N-terminus, the 151-residue chain is Macrodomain Ter protein (151 aa).

It belongs to the MatP family. As to quaternary structure, homodimer.

It localises to the cytoplasm. Its function is as follows. Required for spatial organization of the terminus region of the chromosome (Ter macrodomain) during the cell cycle. Prevents early segregation of duplicated Ter macrodomains during cell division. Binds specifically to matS, which is a 13 bp signature motif repeated within the Ter macrodomain. The polypeptide is Macrodomain Ter protein (Yersinia enterocolitica serotype O:8 / biotype 1B (strain NCTC 13174 / 8081)).